The chain runs to 341 residues: Acetylpolyamine amidohydrolase (341 aa).

Residues Tyr19, Glu106, and Glu117 each contribute to the substrate site. His159 serves as the catalytic Proton donor/acceptor. Residues Asp195, His197, and Asp284 each contribute to the Zn(2+) site. Tyr323 is a binding site for substrate.

Belongs to the histone deacetylase family. As to quaternary structure, homodimer. It depends on Zn(2+) as a cofactor.

The catalysed reaction is N-acetylputrescine + H2O = putrescine + acetate. The enzyme catalyses N-acetylcadaverine + H2O = cadaverine + acetate. It carries out the reaction N(1)-acetylspermine + H2O = spermine + acetate. It catalyses the reaction N(1)-acetylspermidine + H2O = spermidine + acetate. The catalysed reaction is N(8)-acetylspermidine + H2O = spermidine + acetate. Its pathway is amine and polyamine metabolism. With respect to regulation, zinc ions inhibit enzyme activity in a dose-dependent manner. Inhibited by KCl at concentrations above 10 mM. Inhibited by o-oxyquinoline in vitro, suggesting that it is a metalloprotein. Inhibited by various substrate N(8)-acetylspermidine analogs bearing different metal-binding groups such as trifluoromethylketone, thiol, or hydroxamate, and by hydroxamate analogs of short-chain acetyldiamines. In terms of biological role, involved in polyamine metabolism. Catalyzes the deacetylation of various acetylated polyamines such as N-acetylputrescine, N-acetylcadaverine, N(1)-acetylspermine, N(1)-acetylspermidine and N(8)-acetylspermidine. In vitro, is also able to deacetylate L-Lys(epsilon-acetyl)coumarin, but has very low activity towards the larger tetrapeptide N-acetyl-L-Arg-L-His-L-Lys(epsilon-acetyl)-L-Lys(epsilon-acetyl)coumarin. This Mycoplana ramosa (Mycoplana bullata) protein is Acetylpolyamine amidohydrolase.